The chain runs to 27 residues: Natriuretic peptides A (27 aa).

A disulfide bridge links cysteine 7 with cysteine 23.

This sequence belongs to the natriuretic peptide family.

Its subcellular location is the secreted. Hormone playing a key role in cardiovascular homeostasis through regulation of natriuresis, diuresis, and vasodilation. Has a cGMP-stimulating activity. This is Natriuretic peptides A (nppa) from Anguilla japonica (Japanese eel).